Here is a 230-residue protein sequence, read N- to C-terminus: UPF0758 protein Daud_1467 (230 aa).

Positions 108-230 (TVRTPEEAAG…FTSLKLEGLF (123 aa)) constitute an MPN domain. Zn(2+) contacts are provided by His-179, His-181, and Asp-192. A JAMM motif motif is present at residues 179-192 (HNHPSGDPAPSPQD).

The protein belongs to the UPF0758 family.

The chain is UPF0758 protein Daud_1467 from Desulforudis audaxviator (strain MP104C).